The sequence spans 131 residues: Actin-associated protein FAM107A (131 aa).

Residues 57–77 adopt a coiled-coil conformation; sequence VLEHRRRNQLIKKKEEELEAK. The Nuclear localization signal motif lies at 61–71; it reads RRRNQLIKKKE.

As to quaternary structure, interacts with ACTB. Interacts with COMMD1; this interaction stabilizes COMMD1 in the nucleus. Interacts with MAP1A. Interacts with PRDX1. Interacts with F-actin.

Its subcellular location is the nucleus. It localises to the cytoplasm. The protein resides in the cytoskeleton. It is found in the stress fiber. The protein localises to the cell junction. Its subcellular location is the focal adhesion. It localises to the cell projection. The protein resides in the ruffle membrane. It is found in the synapse. Its function is as follows. Stress-inducible actin-binding protein that plays a role in synaptic and cognitive functions by modulating actin filamentous (F-actin) dynamics. Mediates polymerization of globular actin to F-actin. Also binds to, stabilizes and bundles F-actin. Involved in synaptic function by regulating neurite outgrowth in an actin-dependent manner and for the acquisition of hippocampus-dependent cognitive function, such as learning and long-term memory. Plays a role in the actin and microtubule cytoskeleton organization; negatively regulates focal adhesion (FA) assembly promoting malignant glial cell migration in an actin-, microtubule- and MAP1A-dependent manner. Also involved in neuroblastoma G1/S phase cell cycle progression and cell proliferation inhibition by stimulating ubiquitination of NF-kappa-B subunit RELA and NF-kappa-B degradation in a COMMD1- and actin-dependent manner. May play a role in tumor development. The chain is Actin-associated protein FAM107A from Rattus norvegicus (Rat).